Here is a 485-residue protein sequence, read N- to C-terminus: MLLLELKKTNQTLETIHFIGIGGVGMSGIAEILYNLGYKVQGSDLVENYNTKRLESYGIKIFLGHAEQNITNVSYVVISSAINPKNPEIKEALERKIPIIRRADMLAELMRLKCSVAVSGSHGKTTTTSLVACLFEAAGLCPTVINGGIINNKLTNAYLGSSNYLIAEADESDATFIHIPSTIAIITNIDPEHLDYYRDFETLIGAFRSFITNLPFYGFAVCCIDHKIVRKLVDEITERKIVTYGIDSEDAHIIAFNINTDIASSTFDVKISLPNVLGTTIIEKITIPTPGRHNILNSLAAIAVGIELDFGIKAIKNGFNNFKGVKRRFTKVAEYNNASIIDDYAHHPEEIKATLATAKNIANKQNGKVIAIFQPHRYSRMQYLFDDFMLCFADADILYITDIYAAGENPIEGITGRSLVDKITKRKHHDKANFLAELDDAVGVIIDNAASGDMIIMMGAGNISSFANELDGRLSSSGFSCHTVV.

120 to 126 (GSHGKTT) is a binding site for ATP.

The protein belongs to the MurCDEF family.

It localises to the cytoplasm. It catalyses the reaction UDP-N-acetyl-alpha-D-muramate + L-alanine + ATP = UDP-N-acetyl-alpha-D-muramoyl-L-alanine + ADP + phosphate + H(+). Its pathway is cell wall biogenesis; peptidoglycan biosynthesis. In terms of biological role, cell wall formation. The protein is UDP-N-acetylmuramate--L-alanine ligase of Rickettsia peacockii (strain Rustic).